We begin with the raw amino-acid sequence, 238 residues long: Large ribosomal subunit protein uL2 (238 aa).

2 disordered regions span residues 1–34 (MGKR…PPLS) and 197–238 (VDHP…RRKR). The segment covering 224–238 (KVGHIAARRTGRRKR) has biased composition (basic residues).

This sequence belongs to the universal ribosomal protein uL2 family. Part of the 50S ribosomal subunit. Forms a bridge to the 30S subunit in the 70S ribosome.

Functionally, one of the primary rRNA binding proteins. Required for association of the 30S and 50S subunits to form the 70S ribosome, for tRNA binding and peptide bond formation. It has been suggested to have peptidyltransferase activity; this is somewhat controversial. Makes several contacts with the 16S rRNA in the 70S ribosome. In Aeropyrum pernix (strain ATCC 700893 / DSM 11879 / JCM 9820 / NBRC 100138 / K1), this protein is Large ribosomal subunit protein uL2.